Reading from the N-terminus, the 101-residue chain is Small ribosomal subunit protein uS14 (101 aa).

The interval glycine 32 to asparagine 62 is disordered. Over residues aspartate 33–alanine 44 the composition is skewed to basic and acidic residues.

The protein belongs to the universal ribosomal protein uS14 family. Part of the 30S ribosomal subunit. Contacts proteins S3 and S10.

Functionally, binds 16S rRNA, required for the assembly of 30S particles and may also be responsible for determining the conformation of the 16S rRNA at the A site. The protein is Small ribosomal subunit protein uS14 of Verminephrobacter eiseniae (strain EF01-2).